The following is a 290-amino-acid chain: Fructokinase (290 aa).

Residue Thr-130 participates in ATP binding. Zn(2+) contacts are provided by His-153, Cys-169, His-172, and Cys-175. Residues Pro-183 and 231–235 (GVMEK) contribute to the ATP site.

This sequence belongs to the ROK (NagC/XylR) family. Homodimer. Mg(2+) is required as a cofactor.

The enzyme catalyses D-fructose + ATP = D-fructose 6-phosphate + ADP + H(+). With respect to regulation, inactivated by EDTA. Inhibition by zinc ions (Potential). In Lactococcus lactis subsp. cremoris (Streptococcus cremoris), this protein is Fructokinase (scrK).